The sequence spans 102 residues: MEHVNEILATVGVILQQTQTTQDVNASAKLGAYIGAGVTMIAGSTVGIGQGYIFGKAVEAIARNPEVEKQVFKLIFIGSAVSESTAIYGLLISFILIFVAGA.

2 helical membrane-spanning segments follow: residues 34–54 (IGAG…GYIF) and 80–100 (AVSE…IFVA).

It belongs to the ATPase C chain family. As to quaternary structure, F-type ATPases have 2 components, F(1) - the catalytic core - and F(0) - the membrane proton channel. F(1) has five subunits: alpha(3), beta(3), gamma(1), delta(1), epsilon(1). F(0) has three main subunits: a(1), b(2) and c(10-14). The alpha and beta chains form an alternating ring which encloses part of the gamma chain. F(1) is attached to F(0) by a central stalk formed by the gamma and epsilon chains, while a peripheral stalk is formed by the delta and b chains.

It localises to the cell membrane. Its function is as follows. F(1)F(0) ATP synthase produces ATP from ADP in the presence of a proton or sodium gradient. F-type ATPases consist of two structural domains, F(1) containing the extramembraneous catalytic core and F(0) containing the membrane proton channel, linked together by a central stalk and a peripheral stalk. During catalysis, ATP synthesis in the catalytic domain of F(1) is coupled via a rotary mechanism of the central stalk subunits to proton translocation. In terms of biological role, key component of the F(0) channel; it plays a direct role in translocation across the membrane. A homomeric c-ring of between 10-14 subunits forms the central stalk rotor element with the F(1) delta and epsilon subunits. The sequence is that of ATP synthase subunit c from Mycoplasma genitalium (strain ATCC 33530 / DSM 19775 / NCTC 10195 / G37) (Mycoplasmoides genitalium).